Consider the following 144-residue polypeptide: uncharacterized protein (144 aa).

A signal peptide spans 1-23 (MRKILLFATVIGFLIMVSGTLSY).

This is an uncharacterized protein from Archaeoglobus fulgidus (strain ATCC 49558 / DSM 4304 / JCM 9628 / NBRC 100126 / VC-16).